Reading from the N-terminus, the 237-residue chain is 1-(5-phosphoribosyl)-5-[(5-phosphoribosylamino)methylideneamino] imidazole-4-carboxamide isomerase (237 aa).

The Proton acceptor role is filled by Asp8. Asp130 (proton donor) is an active-site residue.

This sequence belongs to the HisA/HisF family.

The protein localises to the cytoplasm. It carries out the reaction 1-(5-phospho-beta-D-ribosyl)-5-[(5-phospho-beta-D-ribosylamino)methylideneamino]imidazole-4-carboxamide = 5-[(5-phospho-1-deoxy-D-ribulos-1-ylimino)methylamino]-1-(5-phospho-beta-D-ribosyl)imidazole-4-carboxamide. The protein operates within amino-acid biosynthesis; L-histidine biosynthesis; L-histidine from 5-phospho-alpha-D-ribose 1-diphosphate: step 4/9. The chain is 1-(5-phosphoribosyl)-5-[(5-phosphoribosylamino)methylideneamino] imidazole-4-carboxamide isomerase from Caldicellulosiruptor bescii (strain ATCC BAA-1888 / DSM 6725 / KCTC 15123 / Z-1320) (Anaerocellum thermophilum).